We begin with the raw amino-acid sequence, 208 residues long: Small ribosomal subunit protein uS4 (208 aa).

Positions 28–48 are disordered; sequence YMERRPYGPGEHGRARKKQDS. Positions 95–160 constitute an S4 RNA-binding domain; that stretch reads MRLDALVLRA…MPPFQVAAAG (66 aa).

It belongs to the universal ribosomal protein uS4 family. In terms of assembly, part of the 30S ribosomal subunit. Contacts protein S5. The interaction surface between S4 and S5 is involved in control of translational fidelity.

In terms of biological role, one of the primary rRNA binding proteins, it binds directly to 16S rRNA where it nucleates assembly of the body of the 30S subunit. Its function is as follows. With S5 and S12 plays an important role in translational accuracy. The protein is Small ribosomal subunit protein uS4 of Arthrobacter sp. (strain FB24).